The following is a 257-amino-acid chain: MTAKIQKILSDLGYGSRRFIECMIKCGKISINGEKAIIGQYLNKKNPGEILIDKKKIIVKRNKNLPKVLIYNKPIGEVCTRDDFQKRLTVFDKLPKLNLNRWVSVGRLDINTKGLLLFTNDGTLANKLMHPRSQIEREYNIRIFGEMNKNKINILRKGVKIIHGYVSFKEIVPLYDKKEGKNKWFKGILCEGKNREIRLMFKSIQCQVNQLIRVRYGNIILPKNLKEGQWMMLNSIFLKKLYNLINFDKEIINKKKN.

One can recognise an S4 RNA-binding domain in the interval A3–K63. D109 (nucleophile) is an active-site residue.

Belongs to the pseudouridine synthase RsuA family.

It catalyses the reaction uridine(2605) in 23S rRNA = pseudouridine(2605) in 23S rRNA. In terms of biological role, responsible for synthesis of pseudouridine from uracil-2605 in 23S ribosomal RNA. This Buchnera aphidicola subsp. Schizaphis graminum (strain Sg) protein is Ribosomal large subunit pseudouridine synthase B (rluB).